A 98-amino-acid polypeptide reads, in one-letter code: NADH-ubiquinone oxidoreductase chain 4L (98 aa).

Transmembrane regions (helical) follow at residues Met-1–Met-21, Ser-29–Leu-49, and Ile-61–Val-81.

This sequence belongs to the complex I subunit 4L family. Core subunit of respiratory chain NADH dehydrogenase (Complex I) which is composed of 45 different subunits.

The protein resides in the mitochondrion inner membrane. The catalysed reaction is a ubiquinone + NADH + 5 H(+)(in) = a ubiquinol + NAD(+) + 4 H(+)(out). In terms of biological role, core subunit of the mitochondrial membrane respiratory chain NADH dehydrogenase (Complex I) which catalyzes electron transfer from NADH through the respiratory chain, using ubiquinone as an electron acceptor. Part of the enzyme membrane arm which is embedded in the lipid bilayer and involved in proton translocation. This chain is NADH-ubiquinone oxidoreductase chain 4L (MT-ND4L), found in Capra hircus (Goat).